A 318-amino-acid polypeptide reads, in one-letter code: tRNA-cytidine(32) 2-sulfurtransferase (318 aa).

The PP-loop motif motif lies at 52–57; it reads SGGKDS. 3 residues coordinate [4Fe-4S] cluster: C127, C130, and C218.

It belongs to the TtcA family. As to quaternary structure, homodimer. The cofactor is Mg(2+). [4Fe-4S] cluster serves as cofactor.

The protein localises to the cytoplasm. The catalysed reaction is cytidine(32) in tRNA + S-sulfanyl-L-cysteinyl-[cysteine desulfurase] + AH2 + ATP = 2-thiocytidine(32) in tRNA + L-cysteinyl-[cysteine desulfurase] + A + AMP + diphosphate + H(+). It functions in the pathway tRNA modification. Catalyzes the ATP-dependent 2-thiolation of cytidine in position 32 of tRNA, to form 2-thiocytidine (s(2)C32). The sulfur atoms are provided by the cysteine/cysteine desulfurase (IscS) system. This chain is tRNA-cytidine(32) 2-sulfurtransferase, found in Actinobacillus pleuropneumoniae serotype 5b (strain L20).